The sequence spans 349 residues: Peptide chain release factor 1 (349 aa).

At glutamine 233 the chain carries N5-methylglutamine.

This sequence belongs to the prokaryotic/mitochondrial release factor family. In terms of processing, methylated by PrmC. Methylation increases the termination efficiency of RF1.

Its subcellular location is the cytoplasm. In terms of biological role, peptide chain release factor 1 directs the termination of translation in response to the peptide chain termination codons UAG and UAA. The sequence is that of Peptide chain release factor 1 from Pelotomaculum thermopropionicum (strain DSM 13744 / JCM 10971 / SI).